The primary structure comprises 439 residues: Ribosomal protein uS12 methylthiotransferase RimO (439 aa).

An MTTase N-terminal domain is found at 6–116 (GKVGFVSLGC…VMNQVHQVAP (111 aa)). [4Fe-4S] cluster contacts are provided by Cys-15, Cys-51, Cys-80, Cys-148, Cys-152, and Cys-155. Residues 134–371 (LTPKHYAYLK…MEVQQRISAS (238 aa)) form the Radical SAM core domain. The 66-residue stretch at 374–439 (QAKIGKRMDV…DEYDLWGRPV (66 aa)) folds into the TRAM domain.

Belongs to the methylthiotransferase family. RimO subfamily. It depends on [4Fe-4S] cluster as a cofactor.

The protein localises to the cytoplasm. It carries out the reaction L-aspartate(89)-[ribosomal protein uS12]-hydrogen + (sulfur carrier)-SH + AH2 + 2 S-adenosyl-L-methionine = 3-methylsulfanyl-L-aspartate(89)-[ribosomal protein uS12]-hydrogen + (sulfur carrier)-H + 5'-deoxyadenosine + L-methionine + A + S-adenosyl-L-homocysteine + 2 H(+). Catalyzes the methylthiolation of an aspartic acid residue of ribosomal protein uS12. The sequence is that of Ribosomal protein uS12 methylthiotransferase RimO from Hahella chejuensis (strain KCTC 2396).